The sequence spans 465 residues: Ribulose bisphosphate carboxylase large chain (465 aa).

N6,N6,N6-trimethyllysine is present on K4. Residues X113 and T163 each coordinate substrate. K165 (proton acceptor) is an active-site residue. Residue K167 coordinates substrate. Mg(2+)-binding residues include K191, D193, and E194. The residue at position 191 (K191) is an N6-carboxylysine. H284 (proton acceptor) is an active-site residue. Substrate contacts are provided by R285, H317, and S369.

This sequence belongs to the RuBisCO large chain family. Type I subfamily. In terms of assembly, heterohexadecamer of 8 large chains and 8 small chains; disulfide-linked. The disulfide link is formed within the large subunit homodimers. Mg(2+) serves as cofactor. In terms of processing, the disulfide bond which can form in the large chain dimeric partners within the hexadecamer appears to be associated with oxidative stress and protein turnover.

It localises to the plastid. The protein resides in the chloroplast. It catalyses the reaction 2 (2R)-3-phosphoglycerate + 2 H(+) = D-ribulose 1,5-bisphosphate + CO2 + H2O. The enzyme catalyses D-ribulose 1,5-bisphosphate + O2 = 2-phosphoglycolate + (2R)-3-phosphoglycerate + 2 H(+). In terms of biological role, ruBisCO catalyzes two reactions: the carboxylation of D-ribulose 1,5-bisphosphate, the primary event in carbon dioxide fixation, as well as the oxidative fragmentation of the pentose substrate in the photorespiration process. Both reactions occur simultaneously and in competition at the same active site. This is Ribulose bisphosphate carboxylase large chain from Cornus obliqua (Silky dogwood).